The chain runs to 242 residues: Methylthioribulose-1-phosphate dehydratase (242 aa).

Residues 1–22 (MAAASGHGLELANGGDATQDKL) form a disordered region. Cysteine 97 provides a ligand contact to substrate. Residues histidine 115 and histidine 117 each coordinate Zn(2+). Catalysis depends on glutamate 139, which acts as the Proton donor/acceptor. A Zn(2+)-binding site is contributed by histidine 195.

Belongs to the aldolase class II family. MtnB subfamily. Zn(2+) is required as a cofactor.

It is found in the cytoplasm. The catalysed reaction is 5-(methylsulfanyl)-D-ribulose 1-phosphate = 5-methylsulfanyl-2,3-dioxopentyl phosphate + H2O. Its pathway is amino-acid biosynthesis; L-methionine biosynthesis via salvage pathway; L-methionine from S-methyl-5-thio-alpha-D-ribose 1-phosphate: step 2/6. Functionally, catalyzes the dehydration of methylthioribulose-1-phosphate (MTRu-1-P) into 2,3-diketo-5-methylthiopentyl-1-phosphate (DK-MTP-1-P). Functions in the methionine salvage pathway. May play a role in apoptosis. This chain is Methylthioribulose-1-phosphate dehydratase, found in Gallus gallus (Chicken).